A 512-amino-acid chain; its full sequence is Sporulation-regulated protein 3 (512 aa).

Positions 31–68 (RQSSQGQYAVDSHPPKSPELKHRRQRSSSFVNGKCRNR) are disordered. The Septin-type G domain occupies 106–365 (NGIDFTLMVA…EKCRSEMLRT (260 aa)). The interval 116 to 123 (GQSGLGKT) is G1 motif. Residues 116 to 123 (GQSGLGKT), Gly-168, 247 to 255 (KSDLLTKEE), and Arg-315 each bind GTP. The interval 165-168 (DTPG) is G3 motif. A G4 motif region spans residues 246–249 (AKSD). Coiled-coil stretches lie at residues 376–406 (TKSV…LKNY) and 451–496 (RDWK…KSSN).

Belongs to the TRAFAC class TrmE-Era-EngA-EngB-Septin-like GTPase superfamily. Septin GTPase family. Interacts with other septin proteins such as SPR28 to form a ring at the bud neck.

It is found in the prospore membrane. The protein localises to the bud neck. In terms of biological role, septins are GTPases involved in cytokinesis that assemble into filaments and form a ring at the cleavage site. May act by recruiting MYO1 and HOF1, a protein involved in septation, to the site of cleavage. Septins are also involved in cell morphogenesis, bud site selection, chitin deposition, cell cycle regulation, cell compartmentalization and spore wall formation. The protein is Sporulation-regulated protein 3 (SPR3) of Saccharomyces cerevisiae (strain ATCC 204508 / S288c) (Baker's yeast).